A 308-amino-acid polypeptide reads, in one-letter code: Putative cathepsin L 3 (308 aa).

Residues 1 to 21 (MKQFLTAAIVTLLMTAGYYHL) form the signal peptide. Residues 22–110 (QEDDTNDFER…GASLPEVQLE (89 aa)) constitute a propeptide, activation peptide. 2 disulfides stabilise this stretch: Cys129–Cys170 and Cys254–Cys298. Catalysis depends on residues His261 and Asn278.

Belongs to the peptidase C1 family.

The protein resides in the secreted. It carries out the reaction Specificity close to that of papain. As compared to cathepsin B, cathepsin L exhibits higher activity toward protein substrates, but has little activity on Z-Arg-Arg-NHMec, and no peptidyl-dipeptidase activity.. Its function is as follows. May be involved in extracellular digestion. This chain is Putative cathepsin L 3, found in Paramecium tetraurelia.